The primary structure comprises 361 residues: S-adenosylmethionine:tRNA ribosyltransferase-isomerase (361 aa).

It belongs to the QueA family. In terms of assembly, monomer.

Its subcellular location is the cytoplasm. It carries out the reaction 7-aminomethyl-7-carbaguanosine(34) in tRNA + S-adenosyl-L-methionine = epoxyqueuosine(34) in tRNA + adenine + L-methionine + 2 H(+). The protein operates within tRNA modification; tRNA-queuosine biosynthesis. In terms of biological role, transfers and isomerizes the ribose moiety from AdoMet to the 7-aminomethyl group of 7-deazaguanine (preQ1-tRNA) to give epoxyqueuosine (oQ-tRNA). This is S-adenosylmethionine:tRNA ribosyltransferase-isomerase from Afipia carboxidovorans (strain ATCC 49405 / DSM 1227 / KCTC 32145 / OM5) (Oligotropha carboxidovorans).